The primary structure comprises 615 residues: Erythritol-mannosyl-transferase 1 (615 aa).

The tract at residues 366-387 is disordered; the sequence is RTPNNTGASTPTAPISSPDFEE. A compositionally biased stretch (polar residues) spans 367 to 380; the sequence is TPNNTGASTPTAPI.

This sequence belongs to the UDP-glycosyltransferase family.

The protein localises to the vacuole membrane. The protein operates within secondary metabolite biosynthesis. Erythritol-mannosyl-transferase; part of the gene cluster that mediates the biosynthesis of mannosylerythritol lipids (MELs), surface-active substances that enhance the availability of water-insoluble substrates. Mannosylerythritol lipid production is responsible for hemolytic activity of Ustilago maydis. Depending on the number of acetyl groups, mannosylerythritol lipids can be differentiated into MEL A (fully acetylated), MEL B and MEL C (monoacetylated at R-6 and R-4, respectively), and the fully deacetylated MEL D. The first step in the pathway is the generation of mannosylerythritol by the glycosyltransferase EMT1 which catalyzes the transfer of GDP-mannose to the C-4 atom of meso-erythritol. This reaction has to be stereospecific, since only mannosyl-D-erythritol is generated. The produced disaccharide is subsequently acylated with fatty acids of various lengths derived from the peroxisomal beta-oxidation by the peroxisomal acyltransferases MAC1 and MAC2 at positions C-2 and C-3, repectively. The existence of MEL derivatives which carry an acetyl group at C-2 implies that at least MAC1 also accepts acetyl-CoA as a donor. The final step of MEL biosynthesis is the acetylation of the fully acylated mannosylerythritol lipids catalyzed by the acetyl-CoA-dependent acetyltransferase MAT1. MAT1 displays a relaxed regioselectivity and is able to transfer acetylgroups to both positions C-4 and C-6 of the mannosyl moiety. In Mycosarcoma maydis (Corn smut fungus), this protein is Erythritol-mannosyl-transferase 1.